The sequence spans 300 residues: 4-hydroxy-tetrahydrodipicolinate synthase (300 aa).

Threonine 57 is a binding site for pyruvate. Tyrosine 145 serves as the catalytic Proton donor/acceptor. The Schiff-base intermediate with substrate role is filled by lysine 173. Position 213 (isoleucine 213) interacts with pyruvate.

This sequence belongs to the DapA family. As to quaternary structure, homotetramer; dimer of dimers.

It is found in the cytoplasm. It catalyses the reaction L-aspartate 4-semialdehyde + pyruvate = (2S,4S)-4-hydroxy-2,3,4,5-tetrahydrodipicolinate + H2O + H(+). Its pathway is amino-acid biosynthesis; L-lysine biosynthesis via DAP pathway; (S)-tetrahydrodipicolinate from L-aspartate: step 3/4. Its function is as follows. Catalyzes the condensation of (S)-aspartate-beta-semialdehyde [(S)-ASA] and pyruvate to 4-hydroxy-tetrahydrodipicolinate (HTPA). This chain is 4-hydroxy-tetrahydrodipicolinate synthase, found in Corynebacterium urealyticum (strain ATCC 43042 / DSM 7109).